The sequence spans 104 residues: Cell division protein FtsL (104 aa).

The Cytoplasmic portion of the chain corresponds to 1–19; that stretch reads MSTPNTHLLCLIATDLRKH. Residues 20–39 traverse the membrane as a helical segment; that stretch reads FFAVLVGMLIVCSAIYNVYT. Over 40-104 the chain is Periplasmic; that stretch reads THKTRGLVTQ…KKNSVLVELR (65 aa).

The protein belongs to the FtsL family. In terms of assembly, part of a complex composed of FtsB, FtsL and FtsQ.

It localises to the cell inner membrane. In terms of biological role, essential cell division protein. May link together the upstream cell division proteins, which are predominantly cytoplasmic, with the downstream cell division proteins, which are predominantly periplasmic. In Psychromonas ingrahamii (strain DSM 17664 / CCUG 51855 / 37), this protein is Cell division protein FtsL.